The primary structure comprises 492 residues: Cytoplasmic dynein 1 light intermediate chain 2 (492 aa).

61-68 (GEDGSGKT) contacts ATP. Disordered stretches follow at residues 188–207 (EEGC…GSDE), 370–423 (LAKQ…KNNA), and 437–492 (LSKK…ENEA). 3 positions are modified to phosphoserine: Ser194, Ser383, and Ser391. Residues 370 to 383 (LAKQPATPTRTSES) are compositionally biased toward polar residues. Omega-N-methylarginine is present on Arg397. Over residues 437-469 (LSKKTGSPGSPSAGGVQSTAKKSGQKTVLSNVQ) the composition is skewed to polar residues. Thr441 bears the Phosphothreonine mark. Residues Ser443 and Ser446 each carry the phosphoserine modification. Over residues 471 to 480 (ELDRMTRKPD) the composition is skewed to basic and acidic residues. Residues 482–492 (MVTNSSTENEA) are compositionally biased toward polar residues.

Belongs to the dynein light intermediate chain family. In terms of assembly, homodimer. The cytoplasmic dynein 1 complex consists of two catalytic heavy chains (HCs) and a number of non-catalytic subunits presented by intermediate chains (ICs), light intermediate chains (LICs) and light chains (LCs); the composition seems to vary in respect to the IC, LIC and LC composition. The heavy chain homodimer serves as a scaffold for the probable homodimeric assembly of the respective non-catalytic subunits. The ICs and LICs bind directly to the HC dimer and the LCs assemble on the IC dimer. Interacts with DYNC1H1; DYNC1LI1 and DYNC1LI2 bind mutually exclusive to DYNC1H.

It is found in the cytoplasm. Its subcellular location is the cytoskeleton. Acts as one of several non-catalytic accessory components of the cytoplasmic dynein 1 complex that are thought to be involved in linking dynein to cargos and to adapter proteins that regulate dynein function. Cytoplasmic dynein 1 acts as a motor for the intracellular retrograde motility of vesicles and organelles along microtubules. May play a role in binding dynein to membranous organelles or chromosomes. In Mus musculus (Mouse), this protein is Cytoplasmic dynein 1 light intermediate chain 2 (Dync1li2).